Here is a 216-residue protein sequence, read N- to C-terminus: MRLILLGPPGAGKGTQAQRIVEKHGIPQLSTGDMLRAAVGVGTEVGKRAKAVMDAGKLVSDEIVIAIVSERIDQPDCANGFILDGFPRTLVQADATEAMLKAKGLDLSVVIEFRVDDQELVRRVDGRYTCAQCGTVYHDTDKVPVEEGVCDKCGSTHFKRRPDDNAETMIKRLEVYYKETSPLIGYYYAKGKLRSVDGMAEIDQVTTEVESILSKL.

Residue 10-15 (GAGKGT) participates in ATP binding. Residues 30-59 (STGDMLRAAVGVGTEVGKRAKAVMDAGKLV) are NMP. Residues T31, R36, 57–59 (KLV), 85–88 (GFPR), and Q92 contribute to the AMP site. The tract at residues 126-163 (GRYTCAQCGTVYHDTDKVPVEEGVCDKCGSTHFKRRPD) is LID. Residue R127 coordinates ATP. Zn(2+) contacts are provided by C130 and C133. 136–137 (VY) lines the ATP pocket. Zn(2+) contacts are provided by C150 and C153. Positions 160 and 172 each coordinate AMP. Position 200 (A200) interacts with ATP.

It belongs to the adenylate kinase family. In terms of assembly, monomer.

It localises to the cytoplasm. The catalysed reaction is AMP + ATP = 2 ADP. The protein operates within purine metabolism; AMP biosynthesis via salvage pathway; AMP from ADP: step 1/1. In terms of biological role, catalyzes the reversible transfer of the terminal phosphate group between ATP and AMP. Plays an important role in cellular energy homeostasis and in adenine nucleotide metabolism. This chain is Adenylate kinase, found in Rhizobium etli (strain CIAT 652).